Here is a 247-residue protein sequence, read N- to C-terminus: C-X-C motif chemokine 16 (247 aa).

The signal sequence occupies residues Met-1–Gly-26. Residues Asn-27–Ala-198 are Extracellular-facing. 2 disulfides stabilise this stretch: Cys-35–Cys-65 and Cys-37–Cys-79. The disordered stretch occupies residues Ile-120–Leu-152. Positions Thr-131–Ser-147 are enriched in low complexity. Residues Leu-199–Val-219 form a helical membrane-spanning segment. Residues Leu-220–Leu-247 are Cytoplasmic-facing.

Belongs to the intercrine alpha (chemokine CxC) family. Post-translationally, glycosylated.

The protein localises to the membrane. Induces a strong chemotactic response. Induces calcium mobilization. Binds to CXCR6/Bonzo. Also acts as a scavenger receptor on macrophages, which specifically binds to OxLDL (oxidized low density lipoprotein), suggesting that it may be involved in pathophysiology such as atherogenesis. The protein is C-X-C motif chemokine 16 (Cxcl16) of Rattus norvegicus (Rat).